The chain runs to 698 residues: MSARPTDASMEPRAVPHSYRKRVHSTVELAALVYQPLEASGALLSILRGKLYHQRNVRSVLDVVAVPTDTGDQGHSAASKVRVEYLAPPSNKANRNSSSNISCALRDDIQRGSRAAATCNSSSPPTPPAFLEGCCKMCLLDPTVLEAAELWPDPTSVTQNSTPVFLLGAGIPGARVTQQLEAALQTGQLPRKAADLLQQLHERLAASPPSVSLTENQDGDPQAQDSLRAVAAPPSPSSRKRGSYVGAVEVTFASRTVELSYRNYTMSELLSMVLPLREDADLVALSGFEQVGHIAHVNLSAAHLPYADVIGQVILDCNETVSVVVNKVDAISSVFREFKMNIIGERRRADDLGGDVGVGANVSDSGEVGDSLTAEEKAVIALEASSLNSPAEARLNRMLTAAVRQHGCCFRVPYNRVYWNSRLSFEHARLVGQMRPGDVLFDVMAGVGPFAVPAAKKGVKVFANDLNPVAAQYMKVNAELNRLPANSFHVFNMDGRHFLNSVLFDSITGAAASKIEATATSHPGCVCTGRRHVTMNLPAVAVEFLDVFQPLSNTSSLAGEQQSNAATAVAVNERWNRLPAHVEPNDIDQGTLFHVYSFSAAEDLIADAVRQVEANLGYTLPPESIEEVLMVRDVAPTKRMMCVSFTLPPAFWANLLASQPGNDGASFTHAETVSALVEEGAEPTIKRAKADALLTRGV.

The segment at S207 to G242 is disordered. Residues H427, D465–L466, D494–G495, and N536 contribute to the S-adenosyl-L-methionine site.

The protein belongs to the class I-like SAM-binding methyltransferase superfamily. TRM5/TYW2 family. Monomer.

The protein localises to the mitochondrion matrix. The protein resides in the nucleus. Its subcellular location is the cytoplasm. It catalyses the reaction guanosine(37) in tRNA + S-adenosyl-L-methionine = N(1)-methylguanosine(37) in tRNA + S-adenosyl-L-homocysteine + H(+). Its function is as follows. Specifically methylates the N1 position of guanosine-37 in various cytoplasmic and mitochondrial tRNAs. Methylation is not dependent on the nature of the nucleoside 5' of the target nucleoside. This is the first step in the biosynthesis of wybutosine (yW), a modified base adjacent to the anticodon of tRNAs and required for accurate decoding. In Leishmania braziliensis, this protein is tRNA (guanine(37)-N(1))-methyltransferase.